The sequence spans 69 residues: Putative F-box protein At2g33705 (69 aa).

Residues 14 to 59 form the F-box domain; the sequence is GVNLEQIPYDLVLEILLKLSAKSIARFRCVSKLWDSTFRSRYFTEL.

This Arabidopsis thaliana (Mouse-ear cress) protein is Putative F-box protein At2g33705.